The following is a 510-amino-acid chain: GMP synthase [glutamine-hydrolyzing] (510 aa).

Residues 3-194 (QILILDFGSQ…ARVICGYKEK (192 aa)) enclose the Glutamine amidotransferase type-1 domain. The Nucleophile role is filled by cysteine 80. Residues histidine 168 and glutamate 170 contribute to the active site. The 191-residue stretch at 195-385 (WTPASIMTAS…LGLGSEIVDI (191 aa)) folds into the GMPS ATP-PPase domain. ATP is bound at residue 222 to 228 (SGGVDSS).

Homodimer.

The enzyme catalyses XMP + L-glutamine + ATP + H2O = GMP + L-glutamate + AMP + diphosphate + 2 H(+). Its pathway is purine metabolism; GMP biosynthesis; GMP from XMP (L-Gln route): step 1/1. Its function is as follows. Catalyzes the synthesis of GMP from XMP. In Elusimicrobium minutum (strain Pei191), this protein is GMP synthase [glutamine-hydrolyzing].